A 201-amino-acid polypeptide reads, in one-letter code: Recombination protein RecR (201 aa).

Residues cysteine 59–cysteine 74 form a C4-type zinc finger. A Toprim domain is found at serine 82–proline 177.

This sequence belongs to the RecR family.

Its function is as follows. May play a role in DNA repair. It seems to be involved in an RecBC-independent recombinational process of DNA repair. It may act with RecF and RecO. This chain is Recombination protein RecR, found in Rickettsia rickettsii (strain Iowa).